A 275-amino-acid polypeptide reads, in one-letter code: tRNA pseudouridine synthase A (275 aa).

Asp72 serves as the catalytic Nucleophile. Tyr133 is a substrate binding site.

This sequence belongs to the tRNA pseudouridine synthase TruA family. Homodimer.

The enzyme catalyses uridine(38/39/40) in tRNA = pseudouridine(38/39/40) in tRNA. Formation of pseudouridine at positions 38, 39 and 40 in the anticodon stem and loop of transfer RNAs. In Gluconobacter oxydans (strain 621H) (Gluconobacter suboxydans), this protein is tRNA pseudouridine synthase A.